The primary structure comprises 194 residues: Putative 3-methyladenine DNA glycosylase (194 aa).

Belongs to the DNA glycosylase MPG family.

The polypeptide is Putative 3-methyladenine DNA glycosylase (Anaeromyxobacter sp. (strain Fw109-5)).